A 100-amino-acid polypeptide reads, in one-letter code: Large ribosomal subunit protein uL23 (100 aa).

This sequence belongs to the universal ribosomal protein uL23 family. As to quaternary structure, part of the 50S ribosomal subunit. Contacts protein L29, and trigger factor when it is bound to the ribosome.

Functionally, one of the early assembly proteins it binds 23S rRNA. One of the proteins that surrounds the polypeptide exit tunnel on the outside of the ribosome. Forms the main docking site for trigger factor binding to the ribosome. In Synechococcus sp. (strain WH7803), this protein is Large ribosomal subunit protein uL23.